The primary structure comprises 89 residues: Small ribosomal subunit protein uS17 (89 aa).

Belongs to the universal ribosomal protein uS17 family. In terms of assembly, part of the 30S ribosomal subunit.

Functionally, one of the primary rRNA binding proteins, it binds specifically to the 5'-end of 16S ribosomal RNA. In Verminephrobacter eiseniae (strain EF01-2), this protein is Small ribosomal subunit protein uS17.